A 435-amino-acid chain; its full sequence is Trigger factor (435 aa).

A PPIase FKBP-type domain is found at 163-248 (GELASVTFSA…VHAVKERKMP (86 aa)).

The protein belongs to the FKBP-type PPIase family. Tig subfamily.

The protein resides in the cytoplasm. It catalyses the reaction [protein]-peptidylproline (omega=180) = [protein]-peptidylproline (omega=0). In terms of biological role, involved in protein export. Acts as a chaperone by maintaining the newly synthesized protein in an open conformation. Functions as a peptidyl-prolyl cis-trans isomerase. This Maridesulfovibrio salexigens (strain ATCC 14822 / DSM 2638 / NCIMB 8403 / VKM B-1763) (Desulfovibrio salexigens) protein is Trigger factor.